Reading from the N-terminus, the 89-residue chain is Putative membrane protein insertion efficiency factor (89 aa).

The tract at residues 68 to 89 is disordered; it reads VPPPNSDARNAPHEAEASSHRL. Residues 77 to 89 are compositionally biased toward basic and acidic residues; the sequence is NAPHEAEASSHRL.

Belongs to the UPF0161 family.

Its subcellular location is the cell inner membrane. Its function is as follows. Could be involved in insertion of integral membrane proteins into the membrane. The polypeptide is Putative membrane protein insertion efficiency factor (Burkholderia mallei (strain SAVP1)).